We begin with the raw amino-acid sequence, 77 residues long: Conodipine-M alpha chain (77 aa).

Pyrrolidone carboxylic acid is present on Gln1. The active site involves His36.

In terms of assembly, heterodimer of an alpha and a beta chains; probably disulfide-linked. Requires Ca(2+) as cofactor. Expressed by the venom duct.

Its subcellular location is the secreted. The enzyme catalyses a 1,2-diacyl-sn-glycero-3-phosphocholine + H2O = a 1-acyl-sn-glycero-3-phosphocholine + a fatty acid + H(+). Inhibited by linoleoyl amide and MG14. Its function is as follows. Heterodimer: conodipine-M catalyzes the calcium-dependent hydrolysis of the 2-acyl groups in 3-sn-phosphoglycerides. This activity may be supported by the alpha chain. Conodipine-M inhibits the binding of isradipine (a ligand specific for L-type calcium channel) to L-type calcium channels. The chain is Conodipine-M alpha chain from Conus magus (Magical cone).